Reading from the N-terminus, the 398-residue chain is Mitochondrial protein import protein mas5 (398 aa).

One can recognise a J domain in the interval 7–88 (GYYKVLELSP…KKKKEYDSGM (82 aa)). A CR-type zinc finger spans residues 139 to 219 (GKVSKFNVRT…CNGAEYIQDK (81 aa)). 144–146 (FNV) is a binding site for substrate. Residues Cys152, Cys155, Cys166, Cys169, Cys192, Cys195, Cys207, and Cys210 each contribute to the Zn(2+) site. CXXCXGXG motif repeat units lie at residues 152–159 (CTTCDGKG), 166–173 (CKKCNGNG), 192–199 (CDGCDGSG), and 207–214 (CSTCNGAE). Residues 221-222 (MF) and 253-255 (VIF) each bind substrate. Positions 367 to 386 (FGSMPEPERDHEDASEEGAQ) are disordered.

The protein belongs to the DnaJ family. In terms of assembly, homodimer. Zn(2+) is required as a cofactor.

The protein localises to the cytoplasm. Its function is as follows. Probably involved in mitosomal protein import. This Encephalitozoon cuniculi (strain GB-M1) (Microsporidian parasite) protein is Mitochondrial protein import protein mas5 (MAS5).